Consider the following 577-residue polypeptide: MNHQETMTDYLMAFIEGLKNSGVEQAVISPGSRSTPLALLLHRETAIQTFVDVDERSAAFFALGLSKASQKPVVLLCTSGTAAANYYPAICEANISHVPLVVLTTDRPHELRQVGAPQAMDQLQMYQNHVKLFVEMALPEATEEMLNYAYWQGAKGAAFAQQTPAAPVHLNFPLREPLLPDLERKTKSSQQTALFAGQSILSTEQVQQLADQWYQKNGVLVVGGSHTEEEATLFIQLAEALQWPLLADPLANIVTHGQNSEVVIAHSDLFLNVATLPQEPEVVVRFGSLPISKNIMLWLKRLATTETAFYFVDENGQWQEQLKKSQTVIQAKETTFVEQLLTVVKPTEATWLAQWLLLEKTVSEVLLETLNATELNETTASLAVHQTMKENGQLFVSNSMAIRYLDRFMDSRPYRMFGNRGINGIDGIVSTALGMSAIAPTQQNVLLIGDLALYHDMNGLFLAKRYQLPLTIVLLNNNGGGIFSFLSQRTLREDDFEPLFGTPLDLDFSLVAELYGASYQEVKTIAELKQILQAAAEEPQFQVIEVKGNRQENVHLYESILAEIGRRVERQGISWNG.

Belongs to the TPP enzyme family. MenD subfamily. Homodimer. It depends on Mg(2+) as a cofactor. Requires Mn(2+) as cofactor. Thiamine diphosphate is required as a cofactor.

It carries out the reaction isochorismate + 2-oxoglutarate + H(+) = 5-enolpyruvoyl-6-hydroxy-2-succinyl-cyclohex-3-ene-1-carboxylate + CO2. The protein operates within quinol/quinone metabolism; 1,4-dihydroxy-2-naphthoate biosynthesis; 1,4-dihydroxy-2-naphthoate from chorismate: step 2/7. It functions in the pathway quinol/quinone metabolism; menaquinone biosynthesis. Catalyzes the thiamine diphosphate-dependent decarboxylation of 2-oxoglutarate and the subsequent addition of the resulting succinic semialdehyde-thiamine pyrophosphate anion to isochorismate to yield 2-succinyl-5-enolpyruvyl-6-hydroxy-3-cyclohexene-1-carboxylate (SEPHCHC). The polypeptide is 2-succinyl-5-enolpyruvyl-6-hydroxy-3-cyclohexene-1-carboxylate synthase (Enterococcus faecalis (strain ATCC 700802 / V583)).